We begin with the raw amino-acid sequence, 292 residues long: Protoheme IX farnesyltransferase (292 aa).

9 helical membrane-spanning segments follow: residues 12-32 (ITWLILMSTGIGYFFGLPQAS), 43-63 (LLRLLHTIIGTGLIASGTAAL), 94-114 (LAFGVALSIAGFVELWLGVNL), 115-135 (LSAGIGAFTLASYLFLYTPMK), 144-164 (VGAIPGAMPPVIGFAAAAGGL), 169-189 (WVLFAILFLWQFPHFYSIAWM), 216-236 (IVIYGIALIPVSLVPALLGMS), 239-259 (LYLVGALLLGLWFLYSGVRVA), and 267-287 (ARGVLITSVLYLPLIYGLMLL).

Belongs to the UbiA prenyltransferase family. Protoheme IX farnesyltransferase subfamily.

The protein resides in the cell inner membrane. It carries out the reaction heme b + (2E,6E)-farnesyl diphosphate + H2O = Fe(II)-heme o + diphosphate. The protein operates within porphyrin-containing compound metabolism; heme O biosynthesis; heme O from protoheme: step 1/1. Functionally, converts heme B (protoheme IX) to heme O by substitution of the vinyl group on carbon 2 of heme B porphyrin ring with a hydroxyethyl farnesyl side group. This chain is Protoheme IX farnesyltransferase, found in Solibacter usitatus (strain Ellin6076).